Consider the following 105-residue polypeptide: Endogenous retrovirus group K member 8 Rec protein (105 aa).

Residues 1-48 are disordered; it reads MNPSEMQRKAPPRRRRHRNRAPLTHKMNKMVTSEEQMKLPSTKKAEPP. Residues 10-20 are compositionally biased toward basic residues; it reads APPRRRRHRNR. The short motif at 13-20 is the Nuclear localization signal element; that stretch reads RRRRHRNR. The Nuclear export signal motif lies at 50-59; it reads WAQLKKLTQL.

Forms homodimers, homotrimers, and homotetramers via a C-terminal domain. Associates with XPO1 and with ZNF145.

It is found in the cytoplasm. The protein localises to the nucleus. Its subcellular location is the nucleolus. In terms of biological role, retroviral replication requires the nuclear export and translation of unspliced, singly-spliced and multiply-spliced derivatives of the initial genomic transcript. Rec interacts with a highly structured RNA element (RcRE) present in the viral 3'LTR and recruits the cellular nuclear export machinery. This permits export to the cytoplasm of unspliced genomic or incompletely spliced subgenomic viral transcripts. In Homo sapiens (Human), this protein is Endogenous retrovirus group K member 8 Rec protein (ERVK-8).